We begin with the raw amino-acid sequence, 322 residues long: Nitrilase (322 aa).

In terms of domain architecture, CN hydrolase spans 5 to 283 (VRVGAVQSEP…EAILTADIDL (279 aa)). The active-site Proton acceptor is E45. K127 is a catalytic residue. C162 serves as the catalytic Nucleophile.

Belongs to the carbon-nitrogen hydrolase superfamily. Nitrilase family.

It carries out the reaction a nitrile + 2 H2O = a carboxylate + NH4(+). Functionally, nitrilase that hydrolyzes preferentially 4-cyanopyridine. This chain is Nitrilase, found in Talaromyces marneffei (strain ATCC 18224 / CBS 334.59 / QM 7333) (Penicillium marneffei).